The primary structure comprises 391 residues: Stearoyl-[acyl-carrier-protein] 9-desaturase 5, chloroplastic (391 aa).

Residues 1–20 form a disordered region; sequence MAFAPSHTASPSYCGVAQGG. Residues 1–32 constitute a chloroplast transit peptide; sequence MAFAPSHTASPSYCGVAQGGRRSNGMSPVVAM. Fe cation contacts are provided by E133, E171, H174, E224, E257, and H260.

It belongs to the fatty acid desaturase type 2 family. As to quaternary structure, homodimer. Fe(2+) is required as a cofactor.

Its subcellular location is the plastid. The protein resides in the chloroplast. It catalyses the reaction octadecanoyl-[ACP] + 2 reduced [2Fe-2S]-[ferredoxin] + O2 + 2 H(+) = (9Z)-octadecenoyl-[ACP] + 2 oxidized [2Fe-2S]-[ferredoxin] + 2 H2O. The protein operates within lipid metabolism; fatty acid metabolism. Functionally, converts stearoyl-ACP to oleoyl-ACP by introduction of a cis double bond between carbons 9 and 10 of the acyl chain. The sequence is that of Stearoyl-[acyl-carrier-protein] 9-desaturase 5, chloroplastic from Oryza sativa subsp. indica (Rice).